The primary structure comprises 381 residues: Probable envelope ADP,ATP carrier protein, chloroplastic (381 aa).

Residues 1–26 constitute a chloroplast transit peptide; that stretch reads MEEDRAILTFHRIPSLNSSLITTSSP. 5 helical membrane passes run 78–98, 154–179, 191–211, 237–257, and 281–301; these read LAILALVPKDAAIFAAGALAG, LPQVIRVLPYSAVQLLAYESYKNLFK, LAAGACAGMTSTLLTYPLDVL, IASFYYGLGPSLVGIAPYIAV, and LLTAVLSAGIATLTCYPLDTV. 3 Solcar repeats span residues 85–177, 185–268, and 279–359; these read PKDA…YKNL, LSVI…VKKS, and SSLL…VKRL. Arg-159 provides a ligand contact to ADP. Arg-302 lines the ADP pocket. A helical membrane pass occupies residues 334 to 360; sequence GFLPNALKTLPNSSIRLTTFDMVKRLI.

It belongs to the mitochondrial carrier (TC 2.A.29) family.

It is found in the plastid. Its subcellular location is the chloroplast membrane. Its function is as follows. Transports adenine nucleotides. This chain is Probable envelope ADP,ATP carrier protein, chloroplastic (EAAC), found in Arabidopsis thaliana (Mouse-ear cress).